The chain runs to 217 residues: Cytidylate kinase (217 aa).

9–17 (GPAASGKSS) lines the ATP pocket.

The protein belongs to the cytidylate kinase family. Type 1 subfamily.

The protein localises to the cytoplasm. The enzyme catalyses CMP + ATP = CDP + ADP. It catalyses the reaction dCMP + ATP = dCDP + ADP. The polypeptide is Cytidylate kinase (Bdellovibrio bacteriovorus (strain ATCC 15356 / DSM 50701 / NCIMB 9529 / HD100)).